The sequence spans 692 residues: Elongation factor G (692 aa).

Residues 8–283 (EKVRNIGIAA…AVVDYLPAPT (276 aa)) form the tr-type G domain. Residues 17-24 (AHIDAGKT), 81-85 (DTPGH), and 135-138 (NKMD) contribute to the GTP site.

This sequence belongs to the TRAFAC class translation factor GTPase superfamily. Classic translation factor GTPase family. EF-G/EF-2 subfamily.

It is found in the cytoplasm. Functionally, catalyzes the GTP-dependent ribosomal translocation step during translation elongation. During this step, the ribosome changes from the pre-translocational (PRE) to the post-translocational (POST) state as the newly formed A-site-bound peptidyl-tRNA and P-site-bound deacylated tRNA move to the P and E sites, respectively. Catalyzes the coordinated movement of the two tRNA molecules, the mRNA and conformational changes in the ribosome. This chain is Elongation factor G, found in Nitratiruptor sp. (strain SB155-2).